A 416-amino-acid polypeptide reads, in one-letter code: Serine hydroxymethyltransferase (416 aa).

(6S)-5,6,7,8-tetrahydrofolate-binding positions include Leu121 and 125-127 (GHL). The residue at position 230 (Lys230) is an N6-(pyridoxal phosphate)lysine.

The protein belongs to the SHMT family. As to quaternary structure, homodimer. The cofactor is pyridoxal 5'-phosphate.

Its subcellular location is the cytoplasm. The enzyme catalyses (6R)-5,10-methylene-5,6,7,8-tetrahydrofolate + glycine + H2O = (6S)-5,6,7,8-tetrahydrofolate + L-serine. It participates in one-carbon metabolism; tetrahydrofolate interconversion. Its pathway is amino-acid biosynthesis; glycine biosynthesis; glycine from L-serine: step 1/1. Its function is as follows. Catalyzes the reversible interconversion of serine and glycine with tetrahydrofolate (THF) serving as the one-carbon carrier. This reaction serves as the major source of one-carbon groups required for the biosynthesis of purines, thymidylate, methionine, and other important biomolecules. Also exhibits THF-independent aldolase activity toward beta-hydroxyamino acids, producing glycine and aldehydes, via a retro-aldol mechanism. The sequence is that of Serine hydroxymethyltransferase from Nitrosomonas eutropha (strain DSM 101675 / C91 / Nm57).